A 453-amino-acid polypeptide reads, in one-letter code: Zinc finger and BTB domain-containing protein 44 (453 aa).

K4 participates in a covalent cross-link: Glycyl lysine isopeptide (Lys-Gly) (interchain with G-Cter in SUMO2). The 68-residue stretch at 31–98 (CDITIRVQDK…AYTATLSINT (68 aa)) folds into the BTB domain. S135 carries the phosphoserine modification. The interval 135-157 (SQPEKSLDAGQENSSNCNFTSRD) is disordered. Positions 145–157 (QENSSNCNFTSRD) are enriched in polar residues. A phosphoserine mark is found at S159, S161, S165, S191, S194, and S199. T200 is modified (phosphothreonine). The tract at residues 241-266 (QPEKAKQAENTRTLELPGPSEAGRRV) is disordered. K290 participates in a covalent cross-link: Glycyl lysine isopeptide (Lys-Gly) (interchain with G-Cter in SUMO2). Disordered regions lie at residues 295-324 (SDEE…PGSE) and 336-366 (SSSI…ADDD). The span at 304–318 (SQPVSASQSSLSDQQ) shows a compositional bias: low complexity. Positions 352–361 (TLQSTSSTNA) are enriched in polar residues. 2 C2H2-type zinc fingers span residues 399–421 (FQCP…MLIH) and 427–449 (FQCD…RLKH).

The protein localises to the nucleus. In Mus musculus (Mouse), this protein is Zinc finger and BTB domain-containing protein 44 (Zbtb44).